We begin with the raw amino-acid sequence, 103 residues long: UPF0473 protein LBA0420 (103 aa).

Belongs to the UPF0473 family.

This is UPF0473 protein LBA0420 from Lactobacillus acidophilus (strain ATCC 700396 / NCK56 / N2 / NCFM).